The primary structure comprises 351 residues: Cytochrome c biogenesis protein CcsA (351 aa).

8 helical membrane-spanning segments follow: residues Asn12 to Pro32, Leu37 to Gly57, Ile68 to Ile88, Leu97 to Leu117, Met143 to Ile163, Ile259 to Asn279, Trp294 to Trp314, and Ala320 to Leu340.

The protein belongs to the CcmF/CycK/Ccl1/NrfE/CcsA family. In terms of assembly, may interact with ccs1.

The protein resides in the cellular thylakoid membrane. In terms of biological role, required during biogenesis of c-type cytochromes (cytochrome c6 and cytochrome f) at the step of heme attachment. This Trichodesmium erythraeum (strain IMS101) protein is Cytochrome c biogenesis protein CcsA.